A 364-amino-acid chain; its full sequence is Alpha-2-HS-glycoprotein (364 aa).

Positions 1–15 form a signal peptide, or 17; it reads MKSFLLLFCLAQLCS. One can recognise a Cystatin fetuin-A-type 1 domain in the interval 27–133; it reads YKEPACDDPD…QFSVLFTKCD (107 aa). Disulfide bonds link Cys-32/Cys-355, Cys-89/Cys-100, Cys-114/Cys-132, Cys-146/Cys-149, Cys-208/Cys-219, and Cys-230/Cys-248. N-linked (GlcNAc...) asparagine glycosylation is present at Asn-99. Ser-134, Ser-135, and Ser-138 each carry phosphoserine. A Cystatin fetuin-A-type 2 domain is found at 144-256; the sequence is KLCPDCPLLA…TCTLFQTQPV (113 aa). N-linked (GlcNAc...) asparagine glycosylation is found at Asn-156 and Asn-176. O-linked (GalNAc...) serine glycosylation occurs at Ser-301. Thr-319 bears the Phosphothreonine mark. Phosphoserine occurs at positions 321, 325, 328, and 330. The O-linked (GalNAc...) threonine glycan is linked to Thr-339.

It belongs to the fetuin family. In terms of processing, phosphorylated by FAM20C in the extracellular medium.

The protein resides in the secreted. The protein is Alpha-2-HS-glycoprotein (AHSG) of Ovis aries (Sheep).